The sequence spans 308 residues: MMMMTSLGGGAGGGGGGGGSGGGRFVTYPPPLSVPPSAPQSPNFSGGLRSQPSFLVEQEKYLSELLAERHKLTPFLPVLPHVCRLMNQEILRVTTLLENALSQSRFDHPSPLASGGIFQNSRADMNGWASQFPSERSVSSSPAPNWLNSPGSSSGLIVKRTIRVDIPVDKYPNYNFVGRLLGPRGNSLKRVEASTDCRVLIRGRGSIKDPIKEDMMRGKPGYEHLNEPLHILVEAELPIEIVDARLMQAREILDDLLTPVEETHDFYKKQQLRELALLNGSLREEGSPMSGSISPYNSLGMKRAKTRG.

Positions 1–26 (MMMMTSLGGGAGGGGGGGGSGGGRFV) are disordered. Gly residues predominate over residues 7 to 24 (LGGGAGGGGGGGGSGGGR). In terms of domain architecture, KH spans 165 to 232 (DIPVDKYPNY…EHLNEPLHIL (68 aa)). The interval 284-308 (EEGSPMSGSISPYNSLGMKRAKTRG) is disordered. Position 294 is a phosphoserine (S294).

The protein localises to the nucleus. The protein is KH domain-containing protein At4g26480 of Arabidopsis thaliana (Mouse-ear cress).